The sequence spans 929 residues: ATP-dependent DNA helicase PIF1 (929 aa).

A mitochondrion-targeting transit peptide spans 1-52; that stretch reads MLRRLLQPAYNVALSGTSASTLPRKSASVGLVRTALMPVDYNAGALFCAMRF. The disordered stretch occupies residues 55 to 89; the sequence is GTEKERKREPKRGSKRRSKATTTLSTPTDAQTSVT. Residues 56–66 are compositionally biased toward basic and acidic residues; that stretch reads TEKERKREPKR. Polar residues predominate over residues 74-89; sequence ATTTLSTPTDAQTSVT. 302–309 is a binding site for ATP; that stretch reads GSAGTGKT. The DNA-binding element occupies 776 to 796; that stretch reads HLLYVAMSRVRNPEQLSMSSF. Positions 902–929 are disordered; it reads HERRQKKMAVEGAKQTDTTKASSGESLE. Polar residues predominate over residues 916–929; it reads QTDTTKASSGESLE.

Belongs to the helicase family. PIF1 subfamily. As to quaternary structure, monomer. It depends on Mg(2+) as a cofactor.

It is found in the mitochondrion. It catalyses the reaction Couples ATP hydrolysis with the unwinding of duplex DNA at the replication fork by translocating in the 5'-3' direction. This creates two antiparallel DNA single strands (ssDNA). The leading ssDNA polymer is the template for DNA polymerase III holoenzyme which synthesizes a continuous strand.. It carries out the reaction ATP + H2O = ADP + phosphate + H(+). Functionally, DNA-dependent ATPase and probable 5'-3' DNA helicase required for the maintenance of mitochondrial (kinetoplast) genome stability. Essential for replication of kinetoplast minicircles. Involved in the segregation of minicircle progeny. The sequence is that of ATP-dependent DNA helicase PIF1 from Trypanosoma brucei brucei (strain 927/4 GUTat10.1).